Consider the following 979-residue polypeptide: Probable serine/threonine-protein kinase iksA (979 aa).

N-linked (GlcNAc...) asparagine glycans are attached at residues Asn-32, Asn-110, Asn-120, Asn-121, Asn-147, Asn-155, Asn-161, Asn-220, Asn-231, and Asn-243. The interval 207 to 245 (SKSGVNNNNNNNNNDSTTTNNNNNNNTTPPQQQQQQNSS) is disordered. Over residues 212 to 244 (NNNNNNNNNDSTTTNNNNNNNTTPPQQQQQQNS) the composition is skewed to low complexity. Residues 261–568 (FKEDIKIGSG…ISQILSTHFI (308 aa)) form the Protein kinase domain. ATP is bound by residues 267-275 (IGSGGFGSV) and Lys-293. Asp-397 functions as the Proton acceptor in the catalytic mechanism. 7 N-linked (GlcNAc...) asparagine glycosylation sites follow: Asn-592, Asn-597, Asn-615, Asn-645, Asn-646, Asn-663, and Asn-699. A compositionally biased stretch (polar residues) spans 593–602 (TSVHNTTAST). A disordered region spans residues 593–666 (TSVHNTTAST…LGNNNNNNTN (74 aa)). Residues 610-666 (SISTTNSTTSSSSSTATSSSLSSTTIATTSSSNAINNTTATTTTNSNLGNNNNNNTN) are compositionally biased toward low complexity. The span at 713–727 (NDDIIIDDDDDDDDS) shows a compositional bias: acidic residues. The tract at residues 713–793 (NDDIIIDDDD…GNNGIRKALP (81 aa)) is disordered. Low complexity-rich tracts occupy residues 728 to 737 (TNNNDTNNTD) and 753 to 773 (NNKKSSYSRSSSIRSPSSSNK). N-linked (GlcNAc...) asparagine glycosylation is found at Asn-731 and Asn-734. The helical transmembrane segment at 846–866 (FPSPILLYPLLLLSLIPILVV) threads the bilayer. N-linked (GlcNAc...) asparagine glycans are attached at residues Asn-870 and Asn-894. 2 helical membrane passes run 912–932 (INTIISIIRFIYYFVISVLLP) and 956–976 (FPLLSLFKNLTLLIINLIFIF).

Belongs to the protein kinase superfamily. Ser/Thr protein kinase family.

It localises to the membrane. The catalysed reaction is L-seryl-[protein] + ATP = O-phospho-L-seryl-[protein] + ADP + H(+). It carries out the reaction L-threonyl-[protein] + ATP = O-phospho-L-threonyl-[protein] + ADP + H(+). The polypeptide is Probable serine/threonine-protein kinase iksA (iksA) (Dictyostelium discoideum (Social amoeba)).